Here is a 178-residue protein sequence, read N- to C-terminus: Bifunctional protein PyrR (178 aa).

Positions 99–111 (VILVDDVLFTGRT) match the PRPP-binding motif.

It belongs to the purine/pyrimidine phosphoribosyltransferase family. PyrR subfamily. Homodimer and homohexamer; in equilibrium.

It catalyses the reaction UMP + diphosphate = 5-phospho-alpha-D-ribose 1-diphosphate + uracil. Its function is as follows. Regulates transcriptional attenuation of the pyrimidine nucleotide (pyr) operon by binding in a uridine-dependent manner to specific sites on pyr mRNA. This disrupts an antiterminator hairpin in the RNA and favors formation of a downstream transcription terminator, leading to a reduced expression of downstream genes. Functionally, also displays a weak uracil phosphoribosyltransferase activity which is not physiologically significant. This Ligilactobacillus salivarius (strain UCC118) (Lactobacillus salivarius) protein is Bifunctional protein PyrR.